A 183-amino-acid polypeptide reads, in one-letter code: Caltractin ICL1c (183 aa).

Positions 1-30 (MARRGQQPPPQQQQAPPTQKNQAGKFNPAE) are disordered. 4 EF-hand domains span residues 39-74 (EEVL…LGFE), 75-110 (AKNQ…RISE), 112-147 (DSKA…LGET), and 148-183 (MDDS…KTFA). The Ca(2+) site is built by Asp-52, Asp-54, Thr-56, Ser-58, Glu-63, Asp-88, Asp-90, Ser-92, Gln-94, and Glu-99.

It belongs to the centrin family. As to quaternary structure, monomer.

It is found in the cytoplasm. The protein resides in the cytoskeleton. Plays a fundamental role in microtubule organizing center structure and function. Component of the infraciliary lattice (ICL) and the ciliary basal bodies. The sequence is that of Caltractin ICL1c (Icl1c) from Paramecium tetraurelia.